The primary structure comprises 89 residues: Small ribosomal subunit protein bS20 (89 aa).

This sequence belongs to the bacterial ribosomal protein bS20 family.

Its function is as follows. Binds directly to 16S ribosomal RNA. The sequence is that of Small ribosomal subunit protein bS20 from Syntrophus aciditrophicus (strain SB).